The following is a 431-amino-acid chain: Glutamate-1-semialdehyde 2,1-aminomutase (431 aa).

N6-(pyridoxal phosphate)lysine is present on lysine 270.

Belongs to the class-III pyridoxal-phosphate-dependent aminotransferase family. HemL subfamily. In terms of assembly, homodimer. Pyridoxal 5'-phosphate is required as a cofactor.

Its subcellular location is the cytoplasm. The enzyme catalyses (S)-4-amino-5-oxopentanoate = 5-aminolevulinate. It functions in the pathway porphyrin-containing compound metabolism; protoporphyrin-IX biosynthesis; 5-aminolevulinate from L-glutamyl-tRNA(Glu): step 2/2. The sequence is that of Glutamate-1-semialdehyde 2,1-aminomutase from Limosilactobacillus reuteri subsp. reuteri (strain JCM 1112) (Lactobacillus reuteri).